We begin with the raw amino-acid sequence, 206 residues long: MVSGSGICAKRVVVDGRHHMLGRLASNTAKELLNGQEVVVVRCEEICLSGGLVRQKMKYMRFLRKRMNTKPSHGPIHFRAPSKIFWRTVRGMIPHKTKRGAAALARLKVFEGIPPPYDKIKRMVIPDALKVLRLQSGHKYCLLGRLSSEVGWNHYDTIKELETKRKERSQVMYERKKQLNKLRTKAEKVAEERLGSQLDVLAPVKY.

Belongs to the universal ribosomal protein uL13 family.

This chain is Large ribosomal subunit protein uL13x (RPL13AC), found in Arabidopsis thaliana (Mouse-ear cress).